The sequence spans 341 residues: Small ribosomal subunit protein uS3 (341 aa).

Residues Ile38–Lys106 enclose the KH type-2 domain. 2 disordered regions span residues Arg224 to Ala246 and Pro274 to Gly341. 2 stretches are compositionally biased toward low complexity: residues Ala285 to Glu303 and Ala311 to Ser333.

The protein belongs to the universal ribosomal protein uS3 family. Part of the 30S ribosomal subunit. Forms a tight complex with proteins S10 and S14.

Binds the lower part of the 30S subunit head. Binds mRNA in the 70S ribosome, positioning it for translation. The chain is Small ribosomal subunit protein uS3 from Acidothermus cellulolyticus (strain ATCC 43068 / DSM 8971 / 11B).